A 414-amino-acid chain; its full sequence is ORC1-type DNA replication protein 1 (414 aa).

ATP contacts are provided by residues 70–74, Y213, and R225; that span reads TGKTA.

It belongs to the CDC6/cdc18 family.

Involved in regulation of DNA replication. In Methanosarcina acetivorans (strain ATCC 35395 / DSM 2834 / JCM 12185 / C2A), this protein is ORC1-type DNA replication protein 1 (cdc6-1).